We begin with the raw amino-acid sequence, 464 residues long: L-aspartate oxidase (464 aa).

FAD is bound by residues 8-11 (SGLA) and 37-44 (NSYLAQAG). The Proton donor/acceptor role is filled by arginine 248. FAD contacts are provided by residues glutamate 329 and 345-346 (SL).

Belongs to the FAD-dependent oxidoreductase 2 family. NadB subfamily. FAD is required as a cofactor.

The protein resides in the cytoplasm. The catalysed reaction is L-aspartate + O2 = iminosuccinate + H2O2. The protein operates within cofactor biosynthesis; NAD(+) biosynthesis; iminoaspartate from L-aspartate (oxidase route): step 1/1. Catalyzes the oxidation of L-aspartate to iminoaspartate, the first step in the de novo biosynthesis of NAD(+). The sequence is that of L-aspartate oxidase (nadB) from Pyrococcus furiosus (strain ATCC 43587 / DSM 3638 / JCM 8422 / Vc1).